The chain runs to 190 residues: Acyl-acyl carrier protein thioesterase ATL3, chloroplastic (190 aa).

The transit peptide at 1–49 (MFLQVTGTATPAMPAVVFLNSWRRPLSIPLRSVKTFKPLAFFDLKGGKG) directs the protein to the chloroplast. D66 is a catalytic residue.

This sequence belongs to the 4-hydroxybenzoyl-CoA thioesterase family. Highly expressed in stems and flowers and at lower levels in rosette leaves, cauline leaves and siliques.

The protein resides in the plastid. Its subcellular location is the chloroplast. Functionally, acyl-ACP thioesterase involved in the production of fatty acids and beta-keto fatty acids. Can produce fatty acids of long chain (14:1 and 16:1) and beta-keto fatty acids of medium to long chain (8:0, 10:0, 12:0, 12:1, 14:0 and 16:0) when expressed in a heterologous organism (E.coli). Possesses thioesterase activity for lauroyl-ACP (12:0-ACP) in vitro. May play a role in the generation of long fatty acids in the chloroplast. This is Acyl-acyl carrier protein thioesterase ATL3, chloroplastic from Arabidopsis thaliana (Mouse-ear cress).